A 64-amino-acid chain; its full sequence is Long neurotoxin MS2 (64 aa).

Cystine bridges form between C3–C24, C6–C11, C17–C41, C45–C57, and C58–C63.

The protein belongs to the three-finger toxin family. Ancestral subfamily. Expressed by the venom gland.

The protein localises to the secreted. In terms of biological role, produces peripheral paralysis by blocking neuromuscular transmission at the postsynaptic site. Very weak inhibitor of the endogenous nicotinic acetylcholine receptors (nAChR) in the human rhabdomyosarcoma TE 671 cell line. Not toxic to mice by intraperitoneal injection or to zebrafish by injection at the back of the dorsolateral region. The polypeptide is Long neurotoxin MS2 (Micrurus surinamensis (Surinam coral snake)).